The following is a 253-amino-acid chain: Phosphate import ATP-binding protein PstB (253 aa).

Positions 1–249 (MKLMDVRVSG…PRHELTKKFL (249 aa)) constitute an ABC transporter domain. 38–45 (GPSGSGKS) provides a ligand contact to ATP.

Belongs to the ABC transporter superfamily. Phosphate importer (TC 3.A.1.7) family. In terms of assembly, the complex is composed of two ATP-binding proteins (PstB), two transmembrane proteins (PstC and PstA) and a solute-binding protein (PstS).

It localises to the cell membrane. It catalyses the reaction phosphate(out) + ATP + H2O = ADP + 2 phosphate(in) + H(+). Its function is as follows. Part of the ABC transporter complex PstSACB involved in phosphate import. Responsible for energy coupling to the transport system. The sequence is that of Phosphate import ATP-binding protein PstB from Aeropyrum pernix (strain ATCC 700893 / DSM 11879 / JCM 9820 / NBRC 100138 / K1).